We begin with the raw amino-acid sequence, 435 residues long: 5-methylthioadenosine/S-adenosylhomocysteine deaminase (435 aa).

Zn(2+) is bound by residues His65 and His67. Substrate-binding residues include Glu94, Arg150, and His189. Zn(2+) is bound at residue His216. Substrate contacts are provided by Glu219 and Asp304. Residue Asp304 coordinates Zn(2+).

The protein belongs to the metallo-dependent hydrolases superfamily. MTA/SAH deaminase family. The cofactor is Zn(2+).

The catalysed reaction is S-adenosyl-L-homocysteine + H2O + H(+) = S-inosyl-L-homocysteine + NH4(+). The enzyme catalyses S-methyl-5'-thioadenosine + H2O + H(+) = S-methyl-5'-thioinosine + NH4(+). Functionally, catalyzes the deamination of 5-methylthioadenosine and S-adenosyl-L-homocysteine into 5-methylthioinosine and S-inosyl-L-homocysteine, respectively. Is also able to deaminate adenosine. The polypeptide is 5-methylthioadenosine/S-adenosylhomocysteine deaminase (Bacillus cytotoxicus (strain DSM 22905 / CIP 110041 / 391-98 / NVH 391-98)).